A 358-amino-acid chain; its full sequence is Protein IncC (358 aa).

A disordered region spans residues 1 to 101; sequence MGAIHEETAN…VGSRRQEETG (101 aa). Residues 88–99 show a composition bias toward basic and acidic residues; it reads HRQEVGSRRQEE.

The protein belongs to the ParA family.

This is one of the proteins encoded by the trfB operon; it is involved in plasmid maintenance and replication. The polypeptide is Protein IncC (incC) (Escherichia coli).